The primary structure comprises 72 residues: Small, acid-soluble spore protein C (72 aa).

Belongs to the alpha/beta-type SASP family.

SASP are bound to spore DNA. They are double-stranded DNA-binding proteins that cause DNA to change to an a-like conformation. They protect the DNA backbone from chemical and enzymatic cleavage and are thus involved in dormant spore's high resistance to UV light. This is Small, acid-soluble spore protein C (sspC) from Bacillus subtilis (strain 168).